Reading from the N-terminus, the 91-residue chain is MALDSAKKQEIVTKFGRGENDTGSSEVQIALLTKRISDLTEHLKVFKKDHASRLGLLKLVGQRRRLMRYFKRKDKDAYLKLVAELGIRDNI.

The protein belongs to the universal ribosomal protein uS15 family. Part of the 30S ribosomal subunit. Forms a bridge to the 50S subunit in the 70S ribosome, contacting the 23S rRNA.

In terms of biological role, one of the primary rRNA binding proteins, it binds directly to 16S rRNA where it helps nucleate assembly of the platform of the 30S subunit by binding and bridging several RNA helices of the 16S rRNA. Its function is as follows. Forms an intersubunit bridge (bridge B4) with the 23S rRNA of the 50S subunit in the ribosome. The sequence is that of Small ribosomal subunit protein uS15 from Sulfurimonas denitrificans (strain ATCC 33889 / DSM 1251) (Thiomicrospira denitrificans (strain ATCC 33889 / DSM 1251)).